Consider the following 470-residue polypeptide: 1-aminocyclopropane-1-carboxylate synthase 9 (470 aa).

Residues Glu-47 and Tyr-85 each coordinate substrate. Residue Lys-272 is modified to N6-(pyridoxal phosphate)lysine.

Belongs to the class-I pyridoxal-phosphate-dependent aminotransferase family. As to quaternary structure, homodimer and heterodimer. In vivo, the relevance of heterodimerization with other ACS enzymes is however unsure. Interacts (via its C-terminal region) with FEI1, FEI2, ETO1 and EOL1. Pyridoxal 5'-phosphate serves as cofactor. Post-translationally, may be processed at its C-terminus. As to expression, expressed in roots and siliques.

The catalysed reaction is S-adenosyl-L-methionine = 1-aminocyclopropane-1-carboxylate + S-methyl-5'-thioadenosine + H(+). It participates in alkene biosynthesis; ethylene biosynthesis via S-adenosyl-L-methionine; ethylene from S-adenosyl-L-methionine: step 1/2. 1-aminocyclopropane-1-carboxylate synthase (ACS) enzymes catalyze the conversion of S-adenosyl-L-methionine (SAM) into 1-aminocyclopropane-1-carboxylate (ACC), a direct precursor of ethylene. This is 1-aminocyclopropane-1-carboxylate synthase 9 (ACS9) from Arabidopsis thaliana (Mouse-ear cress).